Here is a 104-residue protein sequence, read N- to C-terminus: DNA-directed RNA polymerase subunit Rpo13 (104 aa).

2 disordered regions span residues 1–34 (MVSG…EEFP) and 76–104 (EKRD…SVEG). Residues 7–31 (TEEEKEGTNDEEVSEEREVEETSEE) show a composition bias toward acidic residues. Residue Glu32 participates in DNA binding. Over residues 80–104 (SRRKAKKAASKKVKKTKKKEKSVEG) the composition is skewed to basic residues. The segment at 81–104 (RRKAKKAASKKVKKTKKKEKSVEG) is required to bind DNA.

Belongs to the archaeal Rpo13 RNA polymerase subunit family. Part of the 13-subunit RNA polymerase complex. Rpo1N and Rpo5 form a cleft which docks Rpo13. Forms predominantly dimers in solution, although monomers and trimers can also be seen. Found associated with RNAP but also as a homodimer pool in the cytoplasm in vivo.

The protein localises to the cytoplasm. The enzyme catalyses RNA(n) + a ribonucleoside 5'-triphosphate = RNA(n+1) + diphosphate. Functionally, DNA-dependent RNA polymerase (RNAP) catalyzes the transcription of DNA into RNA using the four ribonucleoside triphosphates as substrates. A molten-globule protein, it binds dsDNA in the RNAP, in vitro binds dsDNA but not ssDNA. Its position in RNAP implies it functions in both transcription initiation and elongation. This Saccharolobus shibatae (strain ATCC 51178 / DSM 5389 / JCM 8931 / NBRC 15437 / B12) (Sulfolobus shibatae) protein is DNA-directed RNA polymerase subunit Rpo13.